We begin with the raw amino-acid sequence, 198 residues long: Na(+)-translocating NADH-quinone reductase subunit E (198 aa).

6 helical membrane-spanning segments follow: residues 11 to 31, 35 to 55, 77 to 97, 110 to 130, 140 to 160, and 176 to 196; these read AVFI…FLAV, VSTA…AVPV, FLNF…LEMV, GIFL…SFMV, IVYG…LAGL, and LGIT…FSGI.

This sequence belongs to the NqrDE/RnfAE family. Composed of six subunits; NqrA, NqrB, NqrC, NqrD, NqrE and NqrF.

The protein localises to the cell inner membrane. It carries out the reaction a ubiquinone + n Na(+)(in) + NADH + H(+) = a ubiquinol + n Na(+)(out) + NAD(+). Functionally, NQR complex catalyzes the reduction of ubiquinone-1 to ubiquinol by two successive reactions, coupled with the transport of Na(+) ions from the cytoplasm to the periplasm. NqrA to NqrE are probably involved in the second step, the conversion of ubisemiquinone to ubiquinol. The polypeptide is Na(+)-translocating NADH-quinone reductase subunit E (Haemophilus influenzae (strain 86-028NP)).